The sequence spans 1102 residues: Endocytosis protein end4 (1102 aa).

Residues 9–139 form the ENTH domain; that stretch reads DHMQSDASLM…SFHAQHPEFN (131 aa). The segment at 265–334 is disordered; that stretch reads PHDPPDLEGD…SEPEPIQDFW (70 aa). Residues 292-305 are compositionally biased toward polar residues; the sequence is TGASTIAPQPTGTS. Positions 338-661 form a coiled coil; sequence TLDQQLAAQQ…ESLLQLSKLQ (324 aa). The I/LWEQ domain occupies 858–1100; it reads LLNAPGENIE…DMRKTSYHVA (243 aa).

The protein belongs to the SLA2 family.

Its subcellular location is the cytoplasm. It is found in the cytoskeleton. Functionally, required for cellular morphogenesis and polarization of the cortical cytoskeleton. Required for establishment of new polarized growth zones where it acts in actin organization. Involved plasma membrane internalization and is essential for fluid-phase endocytosis. This Schizosaccharomyces pombe (strain 972 / ATCC 24843) (Fission yeast) protein is Endocytosis protein end4 (end4).